We begin with the raw amino-acid sequence, 121 residues long: Small ribosomal subunit protein bS6 (121 aa).

The protein belongs to the bacterial ribosomal protein bS6 family.

Its function is as follows. Binds together with bS18 to 16S ribosomal RNA. This Rickettsia peacockii (strain Rustic) protein is Small ribosomal subunit protein bS6.